The following is a 73-amino-acid chain: IGMAVECKDGYLVGADGCKYGCFTRPGHFCASECSLLKGKDGYCYAWLACYCYNLPDSVPVWDSATNRCGKGK.

The first 7 residues, 1-7 (IGMAVEC), serve as a signal peptide directing secretion. Positions 8-70 (KDGYLVGADG…VWDSATNRCG (63 aa)) constitute an LCN-type CS-alpha/beta domain. Disulfide bonds link C18–C69, C22–C44, C30–C50, and C34–C52. K71 bears the Lysine amide mark.

Belongs to the long (4 C-C) scorpion toxin superfamily. Sodium channel inhibitor family. Beta subfamily. In terms of tissue distribution, expressed by the venom gland.

The protein localises to the secreted. In terms of biological role, beta toxins bind voltage-independently at site-4 of sodium channels (Nav) and shift the voltage of activation toward more negative potentials thereby affecting sodium channel activation and promoting spontaneous and repetitive firing. In Tityus discrepans (Venezuelan scorpion), this protein is Toxin Td7.